The primary structure comprises 439 residues: MRLSRFFLPILKENPKEAEIVSHRLMLRAGMLRQEAAGIYAWLPLGHRVLKKIEQIVREEQNRAGAIELLMPTLQLADLWRESGRYDAYGPEMLRIADRHKRELLYGPTNEEMITEIFRAYVKSYKSLPLNLYHIQWKFRDEQRPRFGVMRGREFLMKDAYSFDVDEAAARKSYNRMFVAYLRTFARMGLKAIPMRAETGPIGGDLSHEFIVLAETGESGVYCDRDVLNLPVPGEDVDYDGDLTPIIQQWTSVYAATEDVHDAARYESEVPEANRLNTRGIEVGQIFYFGTKYSDSMKANVAGPDGADAPIHGGSYGVGVSRLVGAIIEACHDENGIKWPEEVAPFRVAILNLKQGDAQTDAACEQLYRELAAKGVDVLYDDTDQRAGAKFATADLIGIPWQVLVGPKGLADGKVELKRRSDGSRETIALAEAVARLAP.

The protein belongs to the class-II aminoacyl-tRNA synthetase family. ProS type 2 subfamily. As to quaternary structure, homodimer.

The protein localises to the cytoplasm. The enzyme catalyses tRNA(Pro) + L-proline + ATP = L-prolyl-tRNA(Pro) + AMP + diphosphate. Catalyzes the attachment of proline to tRNA(Pro) in a two-step reaction: proline is first activated by ATP to form Pro-AMP and then transferred to the acceptor end of tRNA(Pro). This Rhodopseudomonas palustris (strain BisB5) protein is Proline--tRNA ligase.